Reading from the N-terminus, the 227-residue chain is Cytochrome c oxidase subunit 2 (227 aa).

Topologically, residues Met1–Ser14 are mitochondrial intermembrane. A helical transmembrane segment spans residues Pro15–Met45. The Mitochondrial matrix segment spans residues Leu46–Gln59. A helical membrane pass occupies residues Glu60–Met87. Residues Asp88 to Ser227 are Mitochondrial intermembrane-facing. 6 residues coordinate Cu cation: His161, Cys196, Glu198, Cys200, His204, and Met207. Glu198 contacts Mg(2+).

It belongs to the cytochrome c oxidase subunit 2 family. In terms of assembly, component of the cytochrome c oxidase (complex IV, CIV), a multisubunit enzyme composed of 14 subunits. The complex is composed of a catalytic core of 3 subunits MT-CO1, MT-CO2 and MT-CO3, encoded in the mitochondrial DNA, and 11 supernumerary subunits COX4I, COX5A, COX5B, COX6A, COX6B, COX6C, COX7A, COX7B, COX7C, COX8 and NDUFA4, which are encoded in the nuclear genome. The complex exists as a monomer or a dimer and forms supercomplexes (SCs) in the inner mitochondrial membrane with NADH-ubiquinone oxidoreductase (complex I, CI) and ubiquinol-cytochrome c oxidoreductase (cytochrome b-c1 complex, complex III, CIII), resulting in different assemblies (supercomplex SCI(1)III(2)IV(1) and megacomplex MCI(2)III(2)IV(2)). Found in a complex with TMEM177, COA6, COX18, COX20, SCO1 and SCO2. Interacts with TMEM177 in a COX20-dependent manner. Interacts with COX20. Interacts with COX16. The cofactor is Cu cation.

Its subcellular location is the mitochondrion inner membrane. It catalyses the reaction 4 Fe(II)-[cytochrome c] + O2 + 8 H(+)(in) = 4 Fe(III)-[cytochrome c] + 2 H2O + 4 H(+)(out). In terms of biological role, component of the cytochrome c oxidase, the last enzyme in the mitochondrial electron transport chain which drives oxidative phosphorylation. The respiratory chain contains 3 multisubunit complexes succinate dehydrogenase (complex II, CII), ubiquinol-cytochrome c oxidoreductase (cytochrome b-c1 complex, complex III, CIII) and cytochrome c oxidase (complex IV, CIV), that cooperate to transfer electrons derived from NADH and succinate to molecular oxygen, creating an electrochemical gradient over the inner membrane that drives transmembrane transport and the ATP synthase. Cytochrome c oxidase is the component of the respiratory chain that catalyzes the reduction of oxygen to water. Electrons originating from reduced cytochrome c in the intermembrane space (IMS) are transferred via the dinuclear copper A center (CU(A)) of subunit 2 and heme A of subunit 1 to the active site in subunit 1, a binuclear center (BNC) formed by heme A3 and copper B (CU(B)). The BNC reduces molecular oxygen to 2 water molecules using 4 electrons from cytochrome c in the IMS and 4 protons from the mitochondrial matrix. The polypeptide is Cytochrome c oxidase subunit 2 (MT-CO2) (Gerbilliscus robustus (Fringe-tailed gerbil)).